The chain runs to 296 residues: Cytidine deaminase (296 aa).

CMP/dCMP-type deaminase domains are found at residues 47–167 (EESE…FGPS) and 186–296 (DSSD…IDPA). A substrate-binding site is contributed by 88-90 (NLE). Position 101 (histidine 101) interacts with Zn(2+). Catalysis depends on glutamate 103, which acts as the Proton donor. Zn(2+) is bound by residues cysteine 128 and cysteine 131.

Belongs to the cytidine and deoxycytidylate deaminase family. Homodimer. Requires Zn(2+) as cofactor.

The catalysed reaction is cytidine + H2O + H(+) = uridine + NH4(+). It carries out the reaction 2'-deoxycytidine + H2O + H(+) = 2'-deoxyuridine + NH4(+). In terms of biological role, this enzyme scavenges exogenous and endogenous cytidine and 2'-deoxycytidine for UMP synthesis. This Shewanella woodyi (strain ATCC 51908 / MS32) protein is Cytidine deaminase.